Consider the following 157-residue polypeptide: Transcription elongation factor GreA (157 aa).

Positions 1 to 75 (MSKEIILTQE…VETLINRAKV (75 aa)) form a coiled coil.

The protein belongs to the GreA/GreB family.

In terms of biological role, necessary for efficient RNA polymerase transcription elongation past template-encoded arresting sites. The arresting sites in DNA have the property of trapping a certain fraction of elongating RNA polymerases that pass through, resulting in locked ternary complexes. Cleavage of the nascent transcript by cleavage factors such as GreA or GreB allows the resumption of elongation from the new 3'terminus. GreA releases sequences of 2 to 3 nucleotides. The protein is Transcription elongation factor GreA of Mycoplasma capricolum subsp. capricolum (strain California kid / ATCC 27343 / NCTC 10154).